Reading from the N-terminus, the 443-residue chain is MQRRDDPAARLTRSSGRSCSKDPSGAHPSVRLTPSRPSPLPHRSRGGGGGPRGGARASPATQPPPLLPPSNPGPDATVVGSAPTPLLPPSATAAAKMEPENKYLPELMAEKDSLDPSFTHAMQLLSVEIEKIQKGESKKDDEENYLDLFSHKNMKLKERVLIPVKQYPKFNFVGKILGPQGNTIKRLQEETGAKISVLGKGSMRDKAKEEELRKGGDPKYAHLNMDLHVFIEVFGPPCEAYALMAHAMEEVKKFLVPDMMDDICQEQFLELSYLNGVPEPSRGRGVSVRGRGAAPPPPPVPRGRGVGPPRGALVRGTPVRGSITRGATVTRGVPPPPTVRGAPTPRARTAGIQRIPLPPTPAPETYEDYGYDDSYAEQSYEGYEGYYSQSQGESEYYDYGHGELQDSYEAYGQDDWNGTRPSLKAPPARPVKGAYREHPYGRY.

Residues 1–95 (MQRRDDPAAR…LLPPSATAAA (95 aa)) form a disordered region. S18 and S20 each carry phosphoserine. K21 is modified (N6-acetyllysine). S29 is subject to Phosphoserine. Phosphothreonine is present on T33. An asymmetric dimethylarginine; by PRMT1 mark is found at R45 and R52. S58 is modified (phosphoserine). Positions 61–72 (TQPPPLLPPSNP) are enriched in pro residues. The span at 81 to 95 (SAPTPLLPPSATAAA) shows a compositional bias: low complexity. A Phosphothreonine; by MAPK1 modification is found at T84. Residues K96 and K102 each participate in a glycyl lysine isopeptide (Lys-Gly) (interchain with G-Cter in SUMO2) cross-link. The involved in homodimerization stretch occupies residues 100–260 (ENKYLPELMA…VKKFLVPDMM (161 aa)). S113 is modified (phosphoserine). K139 is covalently cross-linked (Glycyl lysine isopeptide (Lys-Gly) (interchain with G-Cter in SUMO2)). S150 bears the Phosphoserine mark. Residues 171–197 (NFVGKILGPQGNTIKRLQEETGAKISV) form the KH domain. K175 bears the N6-acetyllysine; alternate mark. Residue K175 forms a Glycyl lysine isopeptide (Lys-Gly) (interchain with G-Cter in SUMO2); alternate linkage. T183 is modified (phosphothreonine). A disordered region spans residues 280-317 (PSRGRGVSVRGRGAAPPPPPVPRGRGVGPPRGALVRGT). Omega-N-methylarginine is present on residues R282, R284, and R291. Residues 283-293 (GRGVSVRGRGA) show a composition bias toward low complexity. The residue at position 304 (R304) is an Asymmetric dimethylarginine; by PRMT1. Over residues 307–316 (GPPRGALVRG) the composition is skewed to low complexity. Residues R310 and R315 each carry the omega-N-methylarginine; by PRMT1 modification. Residue R320 is modified to Dimethylated arginine; alternate. R320 bears the Omega-N-methylarginine; by PRMT1; alternate mark. The residue at position 325 (R325) is an Omega-N-methylarginine; by PRMT1. The segment at 326–345 (GATVTRGVPPPPTVRGAPTP) is disordered. Residues R331 and R340 each carry the dimethylated arginine; alternate modification. An omega-N-methylarginine; by PRMT1; alternate mark is found at R331 and R340. Position 331 is an asymmetric dimethylarginine; alternate (R331). Residues 351–443 (GIQRIPLPPT…AYREHPYGRY (93 aa)) form an interaction with HNRNPA1 region. Y387 carries the phosphotyrosine modification. S390 is subject to Phosphoserine. Positions 400-420 (GHGELQDSYEAYGQDDWNGTR) are interaction with ZBTB7A. The disordered stretch occupies residues 411–443 (YGQDDWNGTRPSLKAPPARPVKGAYREHPYGRY). K432 is covalently cross-linked (Glycyl lysine isopeptide (Lys-Gly) (interchain with G-Cter in SUMO2)). The segment covering 434-443 (AYREHPYGRY) has biased composition (basic and acidic residues). Phosphotyrosine; by PTK6 is present on residues Y435, Y440, and Y443.

It belongs to the KHDRBS family. Self-associates to form homooligomers when bound to RNA, oligomerization appears to be limited when binding to proteins. Interacts with KHDRBS3/SLIM-2. Forms a trimeric complex in the nucleus consisting of BANP, HDAC6 and KHDRBS1/SAM68; HDAC6 keeps KHDRBS1 in a deacetylated state which inhibits the inclusion of CD44 alternate exons. The complex is disrupted by MAPK1/MAPK3-mediated phosphorylation of BANP which results in BANP export to the cytoplasm. This facilitates acetylation of KHDRBS1 and CD44 variant exon inclusion. Interacts with KHDRBS2/SLIM-1; heterooligomer formation of KHDRBS family proteins may modulate RNA substrate specificity. Interacts with PIK3R1, PLCG1. Interacts with RASA1, GRB2, SRC, CBP, PRMT1, APC, HNRNPA1. Interacts with PTK6 (via SH3 and SH2 domains). Forms a complex with ILF2, ILF3, YLPM1, RBMX, NCOA5 and PPP1CA. Binds WBP4/FBP21 (via WW domains), FNBP4/FBP30 (via WW domains). Interacts (via Arg/Gly-rich-flanked Pro-rich regions) with FYN (via the SH3 domain). Interacts with the non-receptor tyrosine kinase SRMS; the interaction leads to phosphorylation of KHDRBS1. Interacts with ZBTB7A; negatively regulates KHDRBS1 splicing activity toward BCL2L1. Post-translationally, tyrosine phosphorylated by several non-receptor tyrosine kinases including LCK, FYN and JAK3. Also tyrosine phosphorylated by the non-receptor tyrosine kinase SRMS in an EGF-dependent manner. Phosphorylation by PTK6 negatively regulates its RNA binding ability. Phosphorylation by PTK6 at Tyr-440 dictates the nuclear localization of KHDRBS1. In terms of processing, acetylated. Positively correlates with ability to bind RNA. Deacetylated by HDAC6; this regulates alternative splicing by inhibiting the inclusion of CD44 alternate exons. Arginine methylation is required for nuclear localization, Inhibits interaction with Src-like SH3 domains, but not interaction with WW domains of WBP4/FBP21 and FNBP4/FBP30.

Its subcellular location is the nucleus. The protein localises to the cytoplasm. It localises to the membrane. Functionally, recruited and tyrosine phosphorylated by several receptor systems, for example the T-cell, leptin and insulin receptors. Once phosphorylated, functions as an adapter protein in signal transduction cascades by binding to SH2 and SH3 domain-containing proteins. Role in G2-M progression in the cell cycle. Represses CBP-dependent transcriptional activation apparently by competing with other nuclear factors for binding to CBP. Also acts as a putative regulator of mRNA stability and/or translation rates and mediates mRNA nuclear export. Positively regulates the association of constitutive transport element (CTE)-containing mRNA with large polyribosomes and translation initiation. May not be involved in the nucleocytoplasmic export of unspliced (CTE)-containing RNA species. RNA-binding protein that plays a role in the regulation of alternative splicing and influences mRNA splice site selection and exon inclusion. Binds to RNA containing 5'-[AU]UAA-3' as a bipartite motif spaced by more than 15 nucleotides. Binds poly(A). Can regulate CD44 alternative splicing in a Ras pathway-dependent manner. In cooperation with HNRNPA1 modulates alternative splicing of BCL2L1 by promoting splicing toward isoform Bcl-X(S), and of SMN1. Can regulate alternative splicing of NRXN1 and NRXN3 in the laminin G-like domain 6 containing the evolutionary conserved neurexin alternative spliced segment 4 (AS4) involved in neurexin selective targeting to postsynaptic partners. In a neuronal activity-dependent manner cooperates synergistically with KHDRBS2/SLIM-1 in regulation of NRXN1 exon skipping at AS4. The cooperation with KHDRBS2/SLIM-1 is antagonistic for regulation of NXRN3 alternative splicing at AS4. This chain is KH domain-containing, RNA-binding, signal transduction-associated protein 1, found in Rattus norvegicus (Rat).